The chain runs to 449 residues: Lysine-sensitive aspartokinase 3 (449 aa).

The interval 2–245 is aspartokinase; that stretch reads SEIVVSKFGG…AAKRIDEIAF (244 aa). 8–11 provides a ligand contact to ATP; sequence KFGG. Substrate is bound by residues threonine 45, glutamate 119, and 198-201; that span reads RGGS. ATP contacts are provided by residues 221-222, tyrosine 227, arginine 232, and 257-258; these read TD and KV. The interface stretch occupies residues 246–449; it reads AEAAEMATFG…VQKLHSNLFE (204 aa). Residues 299 to 449 are required for homodimerization; it reads FRALALRRNQ…VQKLHSNLFE (151 aa). Positions 313–394 constitute an ACT domain; sequence LHSLNMLHSR…GLALVALIGN (82 aa). L-lysine is bound by residues methionine 318, serine 321, 324-325, 338-340, and 345-346; these read FL, SVD, and SE.

This sequence belongs to the aspartokinase family. In terms of assembly, homodimer. In the inactive form a homotetramer is formed.

The catalysed reaction is L-aspartate + ATP = 4-phospho-L-aspartate + ADP. The protein operates within amino-acid biosynthesis; L-lysine biosynthesis via DAP pathway; (S)-tetrahydrodipicolinate from L-aspartate: step 1/4. With respect to regulation, synthesis and activity are sensitive to the allosteric inhibitor lysine, one of the end metabolites of the aspartic acid family branched pathway. The chain is Lysine-sensitive aspartokinase 3 (lysC) from Escherichia coli (strain K12).